The primary structure comprises 308 residues: MTQTSNSQYLVILYYQYAPIKDPQTFRDQHFKYCESIGLLGRIIVAQEGINGTLSGPEEQIHKYMDQLKQDPRFCNTVFKMETVEAHVFPRLSIKVKPELVNLSLQENVDLTKDKGAYLAPQEFLQALQEKDTLILDARNDYEYDLGHFRNAVNPNIRHFRDLPNWVKQNTHLLKDKKIVTYCTGGVRCEKFSTFLKKEGFDDVYQLEGGIISYGKHPETQGALWDGQMYVFDQRIAVPVNQKEHVIVGKDYFDGTPCERYINCSNPQCNKQILCHEYNEHKYLGACSDKCSNHPQNRYLKKHNNPNS.

The Rhodanese domain occupies 129-223; that stretch reads QEKDTLILDA…YGKHPETQGA (95 aa). Residue cysteine 183 is the Cysteine persulfide intermediate of the active site.

This sequence belongs to the TrhO family.

It catalyses the reaction uridine(34) in tRNA + AH2 + O2 = 5-hydroxyuridine(34) in tRNA + A + H2O. Catalyzes oxygen-dependent 5-hydroxyuridine (ho5U) modification at position 34 in tRNAs. The protein is tRNA uridine(34) hydroxylase of Onion yellows phytoplasma (strain OY-M).